The primary structure comprises 58 residues: Potassium channel toxin Ts16 (58 aa).

The signal sequence occupies residues 1–16; sequence MHSSVFILILFSLAVI. 3 cysteine pairs are disulfide-bonded: C29–C51, C34–C47, and C38–C53.

As to expression, expressed by the venom gland.

The protein localises to the secreted. Functionally, blocks potassium channels. This Tityus serrulatus (Brazilian scorpion) protein is Potassium channel toxin Ts16.